Here is a 555-residue protein sequence, read N- to C-terminus: GPI-anchor transamidase component PIGS (555 aa).

Residues 2–18 (ATAGAAATDLEVVRGKR) lie on the Cytoplasmic side of the membrane. 2 residues coordinate a cardiolipin: Arg15 and Arg18. Residues 19–39 (AALFFAAVAILLGLPLWWKTT) traverse the membrane as a helical segment. Residues 40–517 (ETYRAPLPYS…LHLLYFPDDQ (478 aa)) lie on the Lumenal side of the membrane. Residues Asn267 and Asn370 are each glycosylated (N-linked (GlcNAc...) asparagine). A helical transmembrane segment spans residues 518 to 532 (KFAIYIPLFLPMAVP). Over 533 to 555 (ILLSLVKIFLETHKSWKKPEKID) the chain is Cytoplasmic.

Belongs to the PIGS family. Heteropentamer. Part of the GPI-anchor transamidase complex, consisting of PIGK, PIGT, PIGS, PIGU and GAA1.

It localises to the endoplasmic reticulum membrane. Its pathway is glycolipid biosynthesis; glycosylphosphatidylinositol-anchor biosynthesis. Component of the glycosylphosphatidylinositol-anchor (GPI-anchor) transamidase (GPI-T) complex that catalyzes the formation of the linkage between a proprotein and a GPI-anchor and participates in GPI anchored protein biosynthesis. This is GPI-anchor transamidase component PIGS from Rattus norvegicus (Rat).